A 388-amino-acid chain; its full sequence is Arginine biosynthesis bifunctional protein ArgJ (388 aa).

Residues threonine 150, lysine 172, threonine 183, glutamate 263, asparagine 383, and serine 388 each coordinate substrate. The active-site Nucleophile is threonine 183.

The protein belongs to the ArgJ family. As to quaternary structure, heterotetramer of two alpha and two beta chains.

The protein resides in the cytoplasm. The enzyme catalyses N(2)-acetyl-L-ornithine + L-glutamate = N-acetyl-L-glutamate + L-ornithine. It catalyses the reaction L-glutamate + acetyl-CoA = N-acetyl-L-glutamate + CoA + H(+). It participates in amino-acid biosynthesis; L-arginine biosynthesis; L-ornithine and N-acetyl-L-glutamate from L-glutamate and N(2)-acetyl-L-ornithine (cyclic): step 1/1. The protein operates within amino-acid biosynthesis; L-arginine biosynthesis; N(2)-acetyl-L-ornithine from L-glutamate: step 1/4. Its function is as follows. Catalyzes two activities which are involved in the cyclic version of arginine biosynthesis: the synthesis of N-acetylglutamate from glutamate and acetyl-CoA as the acetyl donor, and of ornithine by transacetylation between N(2)-acetylornithine and glutamate. The sequence is that of Arginine biosynthesis bifunctional protein ArgJ from Corynebacterium glutamicum (strain ATCC 13032 / DSM 20300 / JCM 1318 / BCRC 11384 / CCUG 27702 / LMG 3730 / NBRC 12168 / NCIMB 10025 / NRRL B-2784 / 534).